The chain runs to 564 residues: Poly(U)-binding-splicing factor PUF60 (564 aa).

Residues 1-521 form an inhibits homodimerization region; it reads MATATIALQV…EDAEIIVKIF (521 aa). The disordered stretch occupies residues 37-61; the sequence is KWKPPQGTESIKMENGQSTGTKLGL. Lysine 48 participates in a covalent cross-link: Glycyl lysine isopeptide (Lys-Gly) (interchain with G-Cter in SUMO2). Threonine 65 carries the phosphothreonine modification. The segment at 82–564 is inhibits transcriptional repression, interaction with ERCC3 and apoptosis induction; it reads QSIKSVLVKQ…ERFDNSDLSA (483 aa). A Glycyl lysine isopeptide (Lys-Gly) (interchain with G-Cter in SUMO2) cross-link involves residue lysine 85. A Phosphoserine modification is found at serine 117. RRM domains lie at 134–212 and 231–309; these read CRVY…RPSN and NRIY…KAVT. Serine 249 carries the phosphoserine modification. Lysine 256 bears the N6-acetyllysine mark. Phosphothreonine is present on threonine 319. Positions 421–442 are disordered; the sequence is KKEKEEEELFPESERPEMLSEQ. Lysine 424 participates in a covalent cross-link: Glycyl lysine isopeptide (Lys-Gly) (interchain with G-Cter in SUMO2). The span at 432-442 shows a compositional bias: basic and acidic residues; that stretch reads ESERPEMLSEQ. At lysine 459 the chain carries N6-acetyllysine. Lysine 463 participates in a covalent cross-link: Glycyl lysine isopeptide (Lys-Gly) (interchain with G-Cter in SUMO2). The RRM 3; atypical domain occupies 467–554; it reads TVMVLRNMVD…RKVVAEVYDQ (88 aa).

It belongs to the RRM half pint family. As to quaternary structure, homodimer. Associates with the spliceosome. Found in a complex with RO60 and Y5 RNA. Found in a complex with FUBP1 and far upstream element (FUSE) DNA segment. Interacts directly with ERCC3. Interacts with CDK7 and GTF2H1. Interacts with SRSF11/P54. Interacts with ARGLU1; interaction may be involved in ARGLU1-mediated modulation of alternative splicing.

The protein resides in the nucleus. DNA- and RNA-binding protein, involved in several nuclear processes such as pre-mRNA splicing, apoptosis and transcription regulation. In association with FUBP1 regulates MYC transcription at the P2 promoter through the core-TFIIH basal transcription factor. Acts as a transcriptional repressor through the core-TFIIH basal transcription factor. Represses FUBP1-induced transcriptional activation but not basal transcription. Decreases ERCC3 helicase activity. Is also involved in pre-mRNA splicing. Promotes splicing of an intron with weak 3'-splice site and pyrimidine tract in a cooperative manner with U2AF2. Involved in apoptosis induction when overexpressed in HeLa cells. Modulates alternative splicing of several mRNAs. Binds to relaxed DNA of active promoter regions. Binds to the pyrimidine tract and 3'-splice site regions of pre-mRNA; binding is enhanced in presence of U2AF2. Binds to Y5 RNA in association with RO60. Binds to poly(U) RNA. This Rattus norvegicus (Rat) protein is Poly(U)-binding-splicing factor PUF60.